The following is a 1643-amino-acid chain: Lysine-specific demethylase 6B (1643 aa).

Disordered stretches follow at residues 52 to 88 (GQPPLPAPLPPSHGSSSGHPSKPYYAPGAPTPRPLHG), 190 to 680 (AKRG…PLED), 704 to 807 (ESIR…LKSL), and 822 to 1096 (GAAV…RSLS). 2 stretches are compositionally biased toward low complexity: residues 63 to 74 (SHGSSSGHPSKP) and 212 to 223 (AALSGPSGEEGL). A Phosphoserine modification is found at Ser-224. The segment covering 242-266 (PGLPLPPPPLPPPPPPPPPPPPPLP) has biased composition (pro residues). Residues 291-307 (GPERKGSAPPERQEQRH) are compositionally biased toward basic and acidic residues. Pro residues predominate over residues 332–342 (AAPPGPGPRPP). Basic and acidic residues predominate over residues 359-370 (DLRESRVQRSRM). Low complexity predominate over residues 394–412 (PGTTTSSSSSSSSNTGLRG). Pro residues predominate over residues 460-484 (SLPPGPSSPPPPPCPRLLRPPPPPA). Residues 550-569 (TTSSSNSNSGSHSSSPAGPV) show a composition bias toward low complexity. Pro residues-rich tracts occupy residues 584-600 (LPRPPSPAQNPQDPPLV) and 641-658 (GPGPPPGPLSKAPQPVPP). Positions 704–714 (ESIRKEEEQQQ) are enriched in basic and acidic residues. Residues 740–764 (TAPTTTAPAVAVTTTTTTTTTTTAT) show a composition bias toward low complexity. Over residues 772 to 800 (PPALPPPPPLAKFPPPSQPQPPPPPPPSP) the composition is skewed to pro residues. Over residues 843 to 877 (SGATALPPTSAAPSAQGSPQPSASSSSQFSTSGGP) the composition is skewed to low complexity. Residues 889 to 904 (VPGPMTPTQPPPPLSL) show a composition bias toward pro residues. The span at 916–929 (EISRACETLVERVG) shows a compositional bias: basic and acidic residues. The segment covering 972–989 (CKRRQKEHQKEHRRHRRA) has biased composition (basic residues). A compositionally biased stretch (basic and acidic residues) spans 990–1003 (CKDSVGRRPREGRA). The span at 1004–1016 (KAKAKVPKEKSRR) shows a compositional bias: basic residues. Positions 1047-1067 (PTAPAPPSAPAPSAQPTPPSA) are enriched in pro residues. Lys-1109 is covalently cross-linked (Glycyl lysine isopeptide (Lys-Gly) (interchain with G-Cter in SUMO2)). Residues 1288-1325 (FQESLQEEKESEDEESEEPDSTTGTPPSSAPDPKNHHI) are disordered. The segment covering 1296–1307 (KESEDEESEEPD) has biased composition (acidic residues). A JmjC domain is found at 1339 to 1502 (RWKPQLQELL…YQLALERYEW (164 aa)). Fe cation is bound by residues His-1390, Glu-1392, and His-1470. Zn(2+)-binding residues include Cys-1575, Cys-1578, Cys-1602, and Cys-1605.

Belongs to the UTX family. Interacts with TLE1. Component of the MLL4 complex, at least composed of KMT2B/MLL4, ASH2L, RBBP5, WDR5, and KDM6B. Interacts with TBX21, SMARCA4, SMARCC1 and SMARCC2. L-ascorbate is required as a cofactor. It depends on Fe(2+) as a cofactor.

The protein resides in the nucleus. The catalysed reaction is N(6),N(6),N(6)-trimethyl-L-lysyl(27)-[histone H3] + 2 2-oxoglutarate + 2 O2 = N(6)-methyl-L-lysyl(27)-[histone H3] + 2 formaldehyde + 2 succinate + 2 CO2. Histone demethylase that specifically demethylates 'Lys-27' of histone H3, thereby playing a central role in histone code. Demethylates trimethylated and dimethylated H3 'Lys-27'. Plays a central role in regulation of posterior development, by regulating HOX gene expression. Involved in inflammatory response by participating in macrophage differentiation in case of inflammation by regulating gene expression and macrophage differentiation. Plays a demethylase-independent role in chromatin remodeling to regulate T-box family member-dependent gene expression by acting as a link between T-box factors and the SMARCA4-containing SWI/SNF remodeling complex. This chain is Lysine-specific demethylase 6B (KDM6B), found in Homo sapiens (Human).